Consider the following 1819-residue polypeptide: Protein REDUCED CHLOROPLAST COVERAGE 2 (1819 aa).

A compositionally biased stretch (basic residues) spans 1–17 (MAPKAGKTKPHKSKGEK). Disordered stretches follow at residues 1–23 (MAPKAGKTKPHKSKGEKKKKEEK), 128–180 (KPPV…GACE), 595–619 (QASSKSESKKTEDPKPEPAVKGLGK), and 634–664 (KANKTEQGKEAPANDTDNTSETEDQKELEKQ). Basic and acidic residues-rich tracts occupy residues 135 to 145 (LPKDSEKKESG) and 600 to 612 (SESKKTEDPKPEP). The Clu domain maps to 329–603 (EDETWGGDGG…NQASSKSESK (275 aa)). Residues 649 to 680 (TDNTSETEDQKELEKQNEEIEKMWKELVTETA) adopt a coiled-coil conformation. TPR repeat units lie at residues 892-925 (GRTLLESSKTSLDKGKLEDAVNYGTKALAKLVAV), 934-967 (AGAYSLLAVVLYHTGDFNQATIYQQKALDINERE), 976-1009 (MKSYGDLAVFYYRLQHTELALKYVNRALYLLHLT), 1018-1051 (AATYINVAMMEEGMKNAHVALRYLHEALKCNQRL), and 1060-1093 (AASYHAIAIALSLMDAYSLSVQHEQTTLQILQAK). Disordered regions lie at residues 1152–1360 (SGIK…PMLS), 1413–1456 (KVNA…SPKE), 1468–1513 (KAFP…SESV), 1527–1573 (LKTV…ASAP), 1616–1670 (STPH…PRIM), and 1731–1809 (LVSE…DYSD). Composition is skewed to basic and acidic residues over residues 1199–1224 (SSDKENKSETKSEEKKVENFDLEQSK) and 1230–1239 (KLVKPEATVH). A Phosphoserine modification is found at serine 1244. Over residues 1269-1313 (KLNTNFMNVTQQPSRSRGKSTNFTSPRTSSNELSISVAGSTSSPA) the composition is skewed to polar residues. At serine 1320 the chain carries Phosphoserine. Residues 1343-1354 (LASSACTEQINK) show a composition bias toward polar residues. Composition is skewed to polar residues over residues 1496-1511 (CLLNKSPTANDSNGSE) and 1536-1546 (NLPNGDSSPKS). The segment covering 1551–1566 (DGEKQDACEAQKEMSK) has biased composition (basic and acidic residues). Residues 1650-1665 (SFPNSTESNGEANQFN) show a composition bias toward polar residues. Residues 1742–1759 (SEEKSGSEEESNNDKNAG) show a composition bias toward basic and acidic residues. Positions 1767 to 1778 (QETTDTPENGHS) are enriched in polar residues. A compositionally biased stretch (basic and acidic residues) spans 1785-1800 (TTSHETCDEKNGERQG).

As to expression, expressed in the non-epidermal tissues of the true leaves. Not detected in the vegetative shoot meristem and leaf primordia.

Its subcellular location is the nucleus. It is found in the cytoplasm. The protein localises to the cytosol. Functionally, negatively regulates meristematic tissue proliferation by integrating developmental signals with carbon source availability. May act as the scaffold of a protein complex, which sequesters key factors that are required for the G2 to M transition in meristematic tissues. Together with REC2, REC3 and FMT/CLU, contributes to the establishment of the cellular volume devoted to the chloroplast compartment. The protein is Protein REDUCED CHLOROPLAST COVERAGE 2 of Arabidopsis thaliana (Mouse-ear cress).